We begin with the raw amino-acid sequence, 312 residues long: Fibrinogen-like protein 1 (312 aa).

Positions 1 to 22 are cleaved as a signal peptide; the sequence is MAKMFSFILVTTALVMGRGSSA. Residues 39-60 adopt a coiled-coil conformation; sequence LLETRVKQQQVKISQLLHEKQV. One can recognise a Fibrinogen C-terminal domain in the interval 74–306; it reads LGGKRQYADC…SVVMKIRPND (233 aa). Cystine bridges form between C83–C112 and C248–C261.

In terms of assembly, homodimer. Interacts (via the Fibrinogen C-terminal domain) with LAG3 (via Ig-like domains 1 and 2).

Its subcellular location is the secreted. Functionally, immune suppressive molecule that inhibits antigen-specific T-cell activation by acting as a major ligand of LAG3. Responsible for LAG3 T-cell inhibitory function. Binds LAG3 independently from MHC class II (MHC-II). Secreted by, and promotes growth of, hepatocytes. This Bos taurus (Bovine) protein is Fibrinogen-like protein 1 (FGL1).